Here is a 152-residue protein sequence, read N- to C-terminus: Kininogen-1c (152 aa).

An N-terminal signal peptide occupies residues 1–23; that stretch reads MRLWFCLSLFIVLCLEHFPGTLA. Basic and acidic residues predominate over residues 28–44; the sequence is VPESEEKTEQFLRDLPK. Positions 28 to 152 are disordered; that stretch reads VPESEEKTEQ…RGKFHSQSHV (125 aa).

It belongs to the bradykinin-related peptide family. In terms of tissue distribution, expressed by the skin glands.

The protein resides in the secreted. Functionally, potent vasodilator. Binds B1 (BDKRB1) and B2 (BDKRB2) bradykinin receptors. This chain is Kininogen-1c, found in Bombina maxima (Giant fire-bellied toad).